The primary structure comprises 707 residues: tRNA 5-methylaminomethyl-2-thiouridine biosynthesis bifunctional protein MnmC (707 aa).

Residues 1 to 264 form a tRNA (mnm(5)s(2)U34)-methyltransferase region; it reads MTKKLEHEYI…KREMLFGTFE (264 aa). The FAD-dependent cmnm(5)s(2)U34 oxidoreductase stretch occupies residues 312 to 707; that stretch reads IGGGLAGAHA…LFRDLTRNRI (396 aa).

It in the N-terminal section; belongs to the methyltransferase superfamily. tRNA (mnm(5)s(2)U34)-methyltransferase family. The protein in the C-terminal section; belongs to the DAO family. FAD is required as a cofactor.

It is found in the cytoplasm. It carries out the reaction 5-aminomethyl-2-thiouridine(34) in tRNA + S-adenosyl-L-methionine = 5-methylaminomethyl-2-thiouridine(34) in tRNA + S-adenosyl-L-homocysteine + H(+). Its function is as follows. Catalyzes the last two steps in the biosynthesis of 5-methylaminomethyl-2-thiouridine (mnm(5)s(2)U) at the wobble position (U34) in tRNA. Catalyzes the FAD-dependent demodification of cmnm(5)s(2)U34 to nm(5)s(2)U34, followed by the transfer of a methyl group from S-adenosyl-L-methionine to nm(5)s(2)U34, to form mnm(5)s(2)U34. In Saccharophagus degradans (strain 2-40 / ATCC 43961 / DSM 17024), this protein is tRNA 5-methylaminomethyl-2-thiouridine biosynthesis bifunctional protein MnmC.